The primary structure comprises 2083 residues: Nonribosomal peptide synthetase sidD (2083 aa).

The adenylation 1 stretch occupies residues 251 to 650 (TYRQIDQYSS…GEIESQLRAR (400 aa)). Residues 764–840 (RELSDLERRL…AMASVVRICD (77 aa)) form the Carrier 1 domain. Serine 801 carries the post-translational modification O-(pantetheine 4'-phosphoryl)serine. The segment at 876–1146 (EDIYPCTPTQ…IATVPIRVRI (271 aa)) is condensation 1. The segment at 1336–1421 (LSPIGCVGEL…TEIERHLAEH (86 aa)) is adenylation 2. One can recognise a Carrier 2 domain in the interval 1557 to 1633 (NHLSASESIL…DAARVMKVDE (77 aa)). At serine 1594 the chain carries O-(pantetheine 4'-phosphoryl)serine. Residues 1674–1946 (DVLPVTDSQD…YQLTPVRVPF (273 aa)) are condensation 2.

The protein belongs to the NRP synthetase family.

Its pathway is siderophore biosynthesis. In terms of biological role, nonribosomal peptide synthetase; part of the siderophore biosynthetic pathway. Aspergillus fumigatus produces four types of siderophores, low-molecular-mass iron chelators, including excreted fusarinine C (FsC) and triacetylfusarinine C (TAFC) for iron uptake; and intacellular ferricrocin (FC) for hyphal and hydroxyferricrocin (HFC) for conidial iron distribution and storage. TAFC consists of three N(2)-acetyl-N(5)-anhydromevalonyl-N(5)-hydroxyornithine residues cyclically linked by ester bonds; FC is a cyclic hexapeptide with the structure Gly-Ser-Gly-(N(5)-acetyl-N(5)-hydroxyornithine)x3. The biosynthesis of all four siderophores depends on the hydroxylation of ornithine, catalyzed by the monooxygenase sidA. Subsequently, the pathways for biosynthesis of extra- and intracellular siderophores split. For biosynthesis of extracellular siderophores, the transacylase sidF transfers anhydromevalonyl to N(5)-hydroxyornithine. The required anhydromevalonyl-CoA moiety is derived from mevalonate by CoA ligation and dehydration catalyzed by sidI and sidH respectively. The acetylation of N(5)-hydroxyornithine for FC biosynthesis involves the constitutively expressed sidL. FC is hydroxylated to HFC by an as yet uncharacterized enzyme during conidiation. Assembly of fusarinine C (FsC) and FC is catalyzed by two different nonribosomal peptide synthetases (NRPS), sidD and sidC respectively. Subsequently, sidG catalyzes N2-acetylation of FsC for forming TAFC. Both extra- and intracellular siderophores are crucial for growth during iron limitation and virulence. The polypeptide is Nonribosomal peptide synthetase sidD (Aspergillus fumigatus (strain ATCC MYA-4609 / CBS 101355 / FGSC A1100 / Af293) (Neosartorya fumigata)).